Reading from the N-terminus, the 304-residue chain is MTRSEGDTWNLASSVGATATMVAAARAAATRRPRPVLTDEYAEPLVRAVGLDVFTKLASGELDPDDLERDVGFARMVDTFAARGRFYDDYFAAAGKAGLRQVVIVASGLDARPYRLSWPAGTTVYEIDQPEVIAFKTATLSRIGAAPTAELRTIGIDLRQDWPAALQDAGFDAAQPTAWLAEGVLIGFLPPEAEVRLLDSITPLSAEGSRFAADYGSLNDASQASTEQARRTTEGWRRRGLDMDIAALTYPGKHTDVAAHLGADGWATTTFGLADLFAAAGLPELTEAEQGPAATLSFVRAIKS.

Residues Asp128 and 157-158 contribute to the S-adenosyl-L-methionine site; that span reads DL.

This sequence belongs to the UPF0677 family.

Its function is as follows. Exhibits S-adenosyl-L-methionine-dependent methyltransferase activity. In Mycobacterium avium (strain 104), this protein is Putative S-adenosyl-L-methionine-dependent methyltransferase MAV_1058.